The primary structure comprises 1003 residues: cGMP-dependent protein kinase (1003 aa).

A disordered region spans residues 1-141 (MGACSSKAQH…KAIKQQEDTQ (141 aa)). A lipid anchor (N-myristoyl glycine) is attached at G2. C4 carries S-palmitoyl cysteine lipidation. The segment covering 69–85 (EQQQQQQQQQQQQQEQQ) has biased composition (low complexity). Basic and acidic residues-rich tracts occupy residues 86–109 (QHPEHQQSEKQQQHGEEQQQERKP) and 127–141 (ERKVQKAIKQQEDTQ). 4 cNMP-binding domain regions span residues 173-289 (VCSS…FLAS), 292-391 (FFEM…RVLG), 411-548 (VFAS…ATLG), and 570-669 (IFRY…LQIV). 4 residues coordinate 3',5'-cyclic GMP: G237, E238, R247, and T248. 3',5'-cyclic GMP-binding residues include R625, G634, E635, A637, R644, and S645. A Protein kinase domain is found at 693–950 (LNVVRVVGRG…YKDIKEHAFF (258 aa)). ATP is bound by residues 699 to 707 (VGRGTFGTV) and K722. Catalysis depends on D816, which acts as the Proton acceptor. An AGC-kinase C-terminal domain is found at 951–1003 (SDFDWDRLAGRDLSPPLLPKGEIYAEDAEEGGLDIEEDEGIELEDEYEWDKDF).

The protein belongs to the protein kinase superfamily. AGC Ser/Thr protein kinase family. cGMP subfamily. As to quaternary structure, monomer. Mg(2+) serves as cofactor.

It is found in the cell membrane. Its subcellular location is the cytoplasm. It carries out the reaction L-seryl-[protein] + ATP = O-phospho-L-seryl-[protein] + ADP + H(+). The catalysed reaction is L-threonyl-[protein] + ATP = O-phospho-L-threonyl-[protein] + ADP + H(+). Its activity is regulated as follows. Activated by cGMP. The cGMP-binding domains acts cooperatively to activate PKG. Inhibited by the antiparasitic small molecule 4-[2-(4-fluorophenyl)-5-(1-methylpiperidine-4-yl)-1Hpyrrol- 3-yl]pyridine (compound 1). Functionally, serine/threonine protein kinase which acts as a downstream effector of the second messenger cGMP. In Eimeria tenella (Coccidian parasite), this protein is cGMP-dependent protein kinase.